Reading from the N-terminus, the 200-residue chain is Large ribosomal subunit protein uL29 (200 aa).

The segment at 1 to 107 is large ribosomal subunit protein uL29; it reads MTIAKELKQK…KQETKKAEVK (107 aa). The interval 92-200 is disordered; it reads STKPESKQET…KMIKTKEKKQ (109 aa). Basic and acidic residues predominate over residues 93–179; that stretch reads TKPESKQETK…QEVKKVEAKK (87 aa). Residues 108-200 form a unknown region; sequence PKVESKPESK…KMIKTKEKKQ (93 aa). Residues 186–200 show a composition bias toward basic residues; the sequence is KPVKAKMIKTKEKKQ.

The protein belongs to the universal ribosomal protein uL29 family.

The polypeptide is Large ribosomal subunit protein uL29 (Mycoplasma genitalium (strain ATCC 33530 / DSM 19775 / NCTC 10195 / G37) (Mycoplasmoides genitalium)).